The sequence spans 34 residues: Aspartate aminotransferase 2 (34 aa).

It belongs to the class-I pyridoxal-phosphate-dependent aminotransferase family. As to quaternary structure, homodimer. Pyridoxal 5'-phosphate is required as a cofactor.

The catalysed reaction is L-aspartate + 2-oxoglutarate = oxaloacetate + L-glutamate. Important for the metabolism of amino acids and Krebs-cycle related organic acids. In plants, it is involved in nitrogen metabolism and in aspects of carbon and energy metabolism. The chain is Aspartate aminotransferase 2 from Pseudotsuga menziesii (Douglas-fir).